The sequence spans 269 residues: Undecaprenyl-diphosphatase (269 aa).

7 helical membrane-spanning segments follow: residues 41–61, 78–98, 107–127, 148–167, 184–204, 213–233, and 248–268; these read FATM…VFHY, GFNL…IGLL, LFSP…MIVI, SLLI…SRSA, AEFS…LSLL, LEWQ…LFVV, and FAYY…EKIV.

The protein belongs to the UppP family.

The protein resides in the cell membrane. It carries out the reaction di-trans,octa-cis-undecaprenyl diphosphate + H2O = di-trans,octa-cis-undecaprenyl phosphate + phosphate + H(+). Its function is as follows. Catalyzes the dephosphorylation of undecaprenyl diphosphate (UPP). Confers resistance to bacitracin. The sequence is that of Undecaprenyl-diphosphatase from Thermoanaerobacter pseudethanolicus (strain ATCC 33223 / 39E) (Clostridium thermohydrosulfuricum).